The chain runs to 643 residues: 1-deoxy-D-xylulose-5-phosphate synthase (643 aa).

Thiamine diphosphate contacts are provided by residues His-78 and 119–121 (AHS). A Mg(2+)-binding site is contributed by Asp-150. Thiamine diphosphate-binding positions include 151-152 (GS), Asn-179, Tyr-288, and Glu-370. Asn-179 is a Mg(2+) binding site.

Belongs to the transketolase family. DXPS subfamily. Homodimer. It depends on Mg(2+) as a cofactor. The cofactor is thiamine diphosphate.

The enzyme catalyses D-glyceraldehyde 3-phosphate + pyruvate + H(+) = 1-deoxy-D-xylulose 5-phosphate + CO2. It functions in the pathway metabolic intermediate biosynthesis; 1-deoxy-D-xylulose 5-phosphate biosynthesis; 1-deoxy-D-xylulose 5-phosphate from D-glyceraldehyde 3-phosphate and pyruvate: step 1/1. Functionally, catalyzes the acyloin condensation reaction between C atoms 2 and 3 of pyruvate and glyceraldehyde 3-phosphate to yield 1-deoxy-D-xylulose-5-phosphate (DXP). The sequence is that of 1-deoxy-D-xylulose-5-phosphate synthase from Brucella suis (strain ATCC 23445 / NCTC 10510).